The chain runs to 72 residues: Penaeidin-2a (72 aa).

Positions 1–21 (MRLVVCLVFLASFALVCQGEA) are cleaved as a signal peptide. 3 disulfide bridges follow: Cys45–Cys59, Cys48–Cys66, and Cys60–Cys67. Lys71 is subject to Lysine amide.

In terms of tissue distribution, higher expression in hemocytes and to a lesser extent in heart, testis, gills, intestine, lymphoid organ and hepatopancreas. Traces in eyes and subcuticular epithelium. Not present in the brain.

It localises to the cytoplasmic granule. Its function is as follows. Antibacterial activity against M.luteus and E.coli bacteria. Antifungal activity against N.crassa and F.oxysporum. Presents chitin-binding activity. This is Penaeidin-2a from Penaeus vannamei (Whiteleg shrimp).